We begin with the raw amino-acid sequence, 166 residues long: Probable glucosamine 6-phosphate N-acetyltransferase 2 (166 aa).

The region spanning 21–166 (VQIRRLEATD…EKGVQMAIYF (146 aa)) is the N-acetyltransferase domain. Residues Ser-43, 93 to 96 (KFLR), and 105 to 107 (EDV) contribute to the substrate site. 115–120 (GRGLGL) serves as a coordination point for acetyl-CoA. Substrate is bound at residue 136-137 (YK). 150 to 152 (YAK) contributes to the acetyl-CoA binding site.

Belongs to the acetyltransferase family. GNA1 subfamily. As to quaternary structure, homodimer.

The protein resides in the endoplasmic reticulum membrane. The enzyme catalyses D-glucosamine 6-phosphate + acetyl-CoA = N-acetyl-D-glucosamine 6-phosphate + CoA + H(+). The protein operates within nucleotide-sugar biosynthesis; UDP-N-acetyl-alpha-D-glucosamine biosynthesis; N-acetyl-alpha-D-glucosamine 1-phosphate from alpha-D-glucosamine 6-phosphate (route I): step 1/2. In terms of biological role, acetyltransferase involved in UDP-N-acetylglucosamine (UDP-GlcNAc) biosynthesis. UDP-GlcNAc is an essential metabolite that serves as an initial sugar donor of N-glycan synthesis and thus plays an important role in protein and lipid glycosylation. The sequence is that of Probable glucosamine 6-phosphate N-acetyltransferase 2 from Oryza sativa subsp. japonica (Rice).